Here is a 173-residue protein sequence, read N- to C-terminus: Regulator of ribonuclease activity A (173 aa).

Belongs to the RraA family. As to quaternary structure, homotrimer. Binds to both RNA-binding sites in the C-terminal region of Rne and to RhlB.

Its subcellular location is the cytoplasm. Globally modulates RNA abundance by binding to RNase E (Rne) and regulating its endonucleolytic activity. Can modulate Rne action in a substrate-dependent manner by altering the composition of the degradosome. Modulates RNA-binding and helicase activities of the degradosome. This chain is Regulator of ribonuclease activity A, found in Vibrio vulnificus (strain YJ016).